Here is a 236-residue protein sequence, read N- to C-terminus: Ribosome assembly factor mrt4 (236 aa).

The protein belongs to the universal ribosomal protein uL10 family. In terms of assembly, associates with the pre-60S ribosomal particle.

The protein localises to the nucleus. The protein resides in the nucleolus. It is found in the cytoplasm. Its function is as follows. Component of the ribosome assembly machinery. Nuclear paralog of the ribosomal protein P0, it binds pre-60S subunits at an early stage of assembly in the nucleolus, and is replaced by P0 in cytoplasmic pre-60S subunits and mature 80S ribosomes. This is Ribosome assembly factor mrt4 from Eremothecium gossypii (strain ATCC 10895 / CBS 109.51 / FGSC 9923 / NRRL Y-1056) (Yeast).